Reading from the N-terminus, the 145-residue chain is Peptide methionine sulfoxide reductase MsrB (145 aa).

In terms of domain architecture, MsrB spans 6–129; the sequence is KNERLQQLTD…NSAALRFIPV (124 aa). The active-site Nucleophile is the C118.

Belongs to the MsrB Met sulfoxide reductase family.

It carries out the reaction L-methionyl-[protein] + [thioredoxin]-disulfide + H2O = L-methionyl-(R)-S-oxide-[protein] + [thioredoxin]-dithiol. The protein is Peptide methionine sulfoxide reductase MsrB of Listeria monocytogenes serovar 1/2a (strain ATCC BAA-679 / EGD-e).